Consider the following 701-residue polypeptide: Arachidonate 12-lipoxygenase, 12R-type (701 aa).

Residues 2 to 119 form the PLAT domain; it reads ATYKVKVATG…TLSLREATGK (118 aa). The Lipoxygenase domain maps to 120 to 701; the sequence is TTADDTLPIL…PVLIENSISI (582 aa). Residues His-398, His-403, His-578, Asn-582, and Ile-701 each contribute to the Fe cation site.

It belongs to the lipoxygenase family. Fe cation is required as a cofactor.

The protein resides in the cytoplasm. The protein localises to the perinuclear region. It carries out the reaction (5Z,8Z,11Z,14Z)-eicosatetraenoate + O2 = (12R)-hydroperoxy-(5Z,8Z,10E,14Z)-eicosatetraenoate. It catalyses the reaction N-[omega-(9Z,12Z)-octadecadienoyloxy]acyl-beta-D-glucosyl-(1&lt;-&gt;1)-octadecasphing-4E-enine + O2 = N-[omega-(9R)-hydroperoxy-(10E,12Z)-octadecadienoyloxy]acyl-beta-D-glucosyl-(1&lt;-&gt;1)-octadecasphing-4E-enine. The catalysed reaction is a N-[omega-(9Z,12Z)-octadecadienoyloxy]-acylsphin-4E-enine + O2 = a N-[omega-(9R)-hydroperoxy-(10E,12Z)-octadecadienoyloxy]-acylsphin-4E-enine. The enzyme catalyses (6Z,9Z,12Z)-octadecatrienoate + O2 = 10-hydroperoxy-(6Z,8E,12Z)-octadecatrienoate. It carries out the reaction (4Z,7Z,10Z,13Z,16Z,19Z)-docosahexaenoate + O2 = 14-hydroperoxy-(4Z,7Z,10Z,12E,16Z,19Z)-docosahexaenoate. It catalyses the reaction (8Z,11Z,14Z)-eicosatrienoate + O2 = (8Z,10E,14Z)-12-hydroperoxyeicosatrienoate. The catalysed reaction is (5Z,8Z,11Z,14Z,17Z)-eicosapentaenoate + O2 = (5Z,7Z,8Z,10E,14Z,17Z)-12-hydroperoxyeicosapentaenoate. The enzyme catalyses (6Z,9Z,12Z)-octadecatrienoate + O2 = 10R-hydroperoxy-(6Z,8E,12Z)-octadecatrienoate. It carries out the reaction 1-O-methyl-(5Z,8Z,11Z,14Z)-eicosatetraenoate + O2 = 1-O-methyl (5Z,8Z,10E,12R,14Z)-hydroperoxyiecosatetraenoate. It catalyses the reaction 1-O-methyl-(5Z,8Z,11Z,14Z)-eicosatetraenoate + O2 = 1-O-methyl-8-hydroperoxy-(5Z,9E,11Z,14Z)-eicosatetraenoate. The catalysed reaction is 1-O-methyl-(5Z,8Z,11Z,14Z)-eicosatetraenoate + O2 = 1-O-methyl-(8R)-hydroperoxy-(5Z,9E,11Z,14Z)-eicosatrienoate. The enzyme catalyses 1-O-methyl-(9Z,12Z)-octadecadienoate + O2 = 1-O-methyl-(9R)-hydroperoxy-(10E,12Z)-octadecadienoate. It carries out the reaction 1-O-methyl-20-hydroxy-(5Z,8Z,11Z,14Z)-eicosatetraenoate + O2 = 1-O-methyl-8-hydroperoxy-20-hydroxy-(5Z,9E,11Z,14Z)-eicosatetraenoate. It catalyses the reaction 1-O-methyl-20-hydroxy-(5Z,8Z,11Z,14Z)-eicosatetraenoate + O2 = 1-O-methyl-12-hydroperoxy-20-hydroxy-(5Z,8Z,10E,14Z)-eicosatetraenoate. The catalysed reaction is 1-O-methyl-20-hydroxy-(5Z,8Z,11Z,14Z)-eicosatetraenoate + O2 = 1-O-methyl-9-hydroperoxy-20-hydroxy-(5Z,7E,11Z,14Z)-eicosatetraenoate. The enzyme catalyses 1-O-methyl-(9Z,12Z)-octadecadienoate + O2 = 1-O-methyl-(13S)-hydroperoxy-(9Z,11E)-octadecadienoate. It participates in lipid metabolism; hydroperoxy eicosatetraenoic acid biosynthesis. The protein operates within lipid metabolism; sphingolipid metabolism. Increased by calcium. Functionally, catalyzes the regio and stereo-specific incorporation of a single molecule of dioxygen into free and esterified polyunsaturated fatty acids generating lipid hydroperoxides that can be further reduced to the corresponding hydroxy species. In the skin, acts upstream of ALOXE3 on the lineolate moiety of esterified omega-hydroxyacyl-sphingosine (EOS) ceramides to produce an epoxy-ketone derivative, a crucial step in the conjugation of omega-hydroxyceramide to membrane proteins. Therefore plays a crucial role in the synthesis of corneocytes lipid envelope and the establishment of the skin barrier to water loss. May also play a role in the regulation of the expression of airway mucins. The sequence is that of Arachidonate 12-lipoxygenase, 12R-type from Rattus norvegicus (Rat).